The chain runs to 126 residues: Scygonadin (126 aa).

The N-terminal stretch at 1–24 (MRSSLLLGLTVVVLLGVIVPPCMA) is a signal peptide.

In terms of tissue distribution, expressed in the ejaculatory ducts of mature males. Not detected in the ejaculatory ducts of immature males. Not detected in hepatopancreas, female reproductive tract, eyes, exoskeleton, subcuticular epithelia, heart, gills, stomach, muscle and hemocytes.

The protein resides in the secreted. In terms of biological role, has antibacterial activity against the Gram-positive bacterium M.luteus with an IC(90) of 125ug/ml. Has weak antibacterial activity against the Gram-negative bacterium A.hydrophila. This Scylla serrata (Mud crab) protein is Scygonadin.